The sequence spans 649 residues: Serine/threonine-protein kinase par-4 (649 aa).

A compositionally biased stretch (polar residues) spans 1-11 (MEGPSSSSVPT). The disordered stretch occupies residues 1–132 (MEGPSSSSVP…DEEAETPEEQ (132 aa)). Positions 45–55 (NTEKMEKEKKP) are enriched in basic and acidic residues. Acidic residues-rich tracts occupy residues 64–77 (PDYD…GSCE) and 117–129 (DDME…AETP). The Protein kinase domain maps to 197–460 (YLWGGIIGTG…ISDVMQHPWF (264 aa)). ATP is bound by residues 203–211 (IGTGSYGKV) and K226. The active-site Proton acceptor is D324. A disordered region spans residues 548 to 649 (TLEKRPGDGP…CIFRSRTDSS (102 aa)). A compositionally biased stretch (low complexity) spans 597-609 (AVEVVEAVAAPEA).

This sequence belongs to the protein kinase superfamily. CAMK Ser/Thr protein kinase family. LKB1 subfamily. The cofactor is Mg(2+). Mn(2+) is required as a cofactor.

It is found in the cytoplasm. Its subcellular location is the cell cortex. It carries out the reaction L-seryl-[protein] + ATP = O-phospho-L-seryl-[protein] + ADP + H(+). It catalyses the reaction L-threonyl-[protein] + ATP = O-phospho-L-threonyl-[protein] + ADP + H(+). Required for cytoplasmic partitioning and asymmetric cell division in early embryogenesis. Phosphorylates and restricts the asymmetry effectors mex-5 and mex-6 to the anterior cytoplasm of the zygote and maintains these phosphorylations until fertilization. Phosphorylates and regulates aak-2 in response to oxidative stress. May also play a role in motility, behavioral response, regulation of lifespan and dauer formation through this pathway. This Caenorhabditis briggsae protein is Serine/threonine-protein kinase par-4.